The chain runs to 313 residues: 4-hydroxy-3-methylbut-2-enyl diphosphate reductase (313 aa).

Cys13 serves as a coordination point for [4Fe-4S] cluster. (2E)-4-hydroxy-3-methylbut-2-enyl diphosphate contacts are provided by His41 and His75. Positions 41 and 75 each coordinate dimethylallyl diphosphate. Isopentenyl diphosphate contacts are provided by His41 and His75. Cys97 is a binding site for [4Fe-4S] cluster. His125 lines the (2E)-4-hydroxy-3-methylbut-2-enyl diphosphate pocket. A dimethylallyl diphosphate-binding site is contributed by His125. Residue His125 coordinates isopentenyl diphosphate. The active-site Proton donor is Glu127. (2E)-4-hydroxy-3-methylbut-2-enyl diphosphate is bound at residue Thr168. Cys218 is a [4Fe-4S] cluster binding site. Positions 246, 247, 248, and 295 each coordinate (2E)-4-hydroxy-3-methylbut-2-enyl diphosphate. The dimethylallyl diphosphate site is built by Ser246, Ser247, Asn248, and Ser295. Isopentenyl diphosphate contacts are provided by Ser246, Ser247, Asn248, and Ser295.

Belongs to the IspH family. It depends on [4Fe-4S] cluster as a cofactor.

It catalyses the reaction isopentenyl diphosphate + 2 oxidized [2Fe-2S]-[ferredoxin] + H2O = (2E)-4-hydroxy-3-methylbut-2-enyl diphosphate + 2 reduced [2Fe-2S]-[ferredoxin] + 2 H(+). The catalysed reaction is dimethylallyl diphosphate + 2 oxidized [2Fe-2S]-[ferredoxin] + H2O = (2E)-4-hydroxy-3-methylbut-2-enyl diphosphate + 2 reduced [2Fe-2S]-[ferredoxin] + 2 H(+). Its pathway is isoprenoid biosynthesis; dimethylallyl diphosphate biosynthesis; dimethylallyl diphosphate from (2E)-4-hydroxy-3-methylbutenyl diphosphate: step 1/1. It participates in isoprenoid biosynthesis; isopentenyl diphosphate biosynthesis via DXP pathway; isopentenyl diphosphate from 1-deoxy-D-xylulose 5-phosphate: step 6/6. Functionally, catalyzes the conversion of 1-hydroxy-2-methyl-2-(E)-butenyl 4-diphosphate (HMBPP) into a mixture of isopentenyl diphosphate (IPP) and dimethylallyl diphosphate (DMAPP). Acts in the terminal step of the DOXP/MEP pathway for isoprenoid precursor biosynthesis. The sequence is that of 4-hydroxy-3-methylbut-2-enyl diphosphate reductase from Chlorobium phaeovibrioides (strain DSM 265 / 1930) (Prosthecochloris vibrioformis (strain DSM 265)).